The following is a 160-amino-acid chain: Large ribosomal subunit protein uL22c (160 aa).

The protein belongs to the universal ribosomal protein uL22 family. As to quaternary structure, part of the 50S ribosomal subunit.

It is found in the plastid. It localises to the chloroplast. This protein binds specifically to 23S rRNA. In terms of biological role, the globular domain of the protein is located near the polypeptide exit tunnel on the outside of the subunit, while an extended beta-hairpin is found that lines the wall of the exit tunnel in the center of the 70S ribosome. The polypeptide is Large ribosomal subunit protein uL22c (rpl22) (Olimarabidopsis pumila (Dwarf rocket)).